A 951-amino-acid polypeptide reads, in one-letter code: AP-1 complex subunit beta-1 (951 aa).

At K318 the chain carries N6-acetyllysine. Y574 is subject to 3'-nitrotyrosine.

It belongs to the adaptor complexes large subunit family. In terms of assembly, adaptor protein complex 1 (AP-1) is a heterotetramer composed of two large adaptins (gamma-type subunit AP1G1 and beta-type subunit AP1B1), a medium adaptin (mu-type subunit AP1M1 or AP1M2) and a small adaptin (sigma-type subunit AP1S1 or AP1S2 or AP1S3).

It is found in the cytoplasmic vesicle. It localises to the clathrin-coated vesicle membrane. The protein resides in the golgi apparatus. In terms of biological role, subunit of clathrin-associated adaptor protein complex 1 that plays a role in protein sorting in the late-Golgi/trans-Golgi network (TGN) and/or endosomes. The AP complexes mediate both the recruitment of clathrin to membranes and the recognition of sorting signals within the cytosolic tails of transmembrane cargo molecules. The protein is AP-1 complex subunit beta-1 (AP2B1) of Bos taurus (Bovine).